Here is a 184-residue protein sequence, read N- to C-terminus: PXMP2/4 family protein 3 (184 aa).

The N-terminal stretch at Met1–Ala44 is a signal peptide. Helical transmembrane passes span Val58–Ile78, Ile97–Ile117, and Leu159–Ala179.

This sequence belongs to the peroxisomal membrane protein PXMP2/4 family.

It localises to the membrane. The chain is PXMP2/4 family protein 3 from Dictyostelium discoideum (Social amoeba).